Reading from the N-terminus, the 494-residue chain is Guanosine-5'-triphosphate,3'-diphosphate pyrophosphatase (494 aa).

The protein belongs to the GppA/Ppx family. GppA subfamily.

The enzyme catalyses guanosine 3'-diphosphate 5'-triphosphate + H2O = guanosine 3',5'-bis(diphosphate) + phosphate + H(+). It participates in purine metabolism; ppGpp biosynthesis; ppGpp from GTP: step 2/2. Its function is as follows. Catalyzes the conversion of pppGpp to ppGpp. Guanosine pentaphosphate (pppGpp) is a cytoplasmic signaling molecule which together with ppGpp controls the 'stringent response', an adaptive process that allows bacteria to respond to amino acid starvation, resulting in the coordinated regulation of numerous cellular activities. This chain is Guanosine-5'-triphosphate,3'-diphosphate pyrophosphatase, found in Citrobacter koseri (strain ATCC BAA-895 / CDC 4225-83 / SGSC4696).